A 68-amino-acid chain; its full sequence is Riparin-1.6 (68 aa).

An N-terminal signal peptide occupies residues 1–15; the sequence is MKIIVFLAVLMLVSA. The propeptide occupies 16–41; that stretch reads QVCLVSAAEMEHSSDNELSSRDLVKR. The cysteines at positions 47 and 53 are disulfide-linked. Cysteine amide is present on cysteine 53. Residues 57 to 68 constitute a propeptide that is removed on maturation; that stretch reads DIESSEGANGGE.

In terms of tissue distribution, expressed by the skin glands.

Its subcellular location is the secreted. In Crinia riparia (Streambank froglet), this protein is Riparin-1.6.